Here is a 362-residue protein sequence, read N- to C-terminus: Phospho-N-acetylmuramoyl-pentapeptide-transferase (362 aa).

The next 10 helical transmembrane spans lie at 21–41 (YITFRAGGACLTALVVSFLLG), 75–95 (TMGGFLILIALTVSTLLWADL), 100–120 (VWAVLMITIGYGALGFADDFL), 136–156 (LVVQAVLGLGAAVWITQLMPG), 170–190 (LMIPFGPLFPLVAMFVMMGAS), 201–221 (GLAIVPTIIAAGVFTLIAYLV), 225–245 (IFSHYLEINFVPGTGELAVFC), 247–267 (ALIGAGMGFLWFNAPPAAVFM), 290–310 (IVLAITGGLFVVETVSVIVQV), and 339–359 (TVVIRFWIVAMILALLGLATL).

Belongs to the glycosyltransferase 4 family. MraY subfamily. Mg(2+) is required as a cofactor.

Its subcellular location is the cell inner membrane. The catalysed reaction is UDP-N-acetyl-alpha-D-muramoyl-L-alanyl-gamma-D-glutamyl-meso-2,6-diaminopimeloyl-D-alanyl-D-alanine + di-trans,octa-cis-undecaprenyl phosphate = di-trans,octa-cis-undecaprenyl diphospho-N-acetyl-alpha-D-muramoyl-L-alanyl-D-glutamyl-meso-2,6-diaminopimeloyl-D-alanyl-D-alanine + UMP. It functions in the pathway cell wall biogenesis; peptidoglycan biosynthesis. Its function is as follows. Catalyzes the initial step of the lipid cycle reactions in the biosynthesis of the cell wall peptidoglycan: transfers peptidoglycan precursor phospho-MurNAc-pentapeptide from UDP-MurNAc-pentapeptide onto the lipid carrier undecaprenyl phosphate, yielding undecaprenyl-pyrophosphoryl-MurNAc-pentapeptide, known as lipid I. The protein is Phospho-N-acetylmuramoyl-pentapeptide-transferase of Acidiphilium cryptum (strain JF-5).